Reading from the N-terminus, the 682-residue chain is Tail-specific protease (682 aa).

Residues 1-22 form the signal peptide; that stretch reads MNTFFRLTALAGLLALAGQSFA. Positions 238–322 constitute a PDZ domain; it reads NTEMSLSLEG…SKVRLEILPA (85 aa). Catalysis depends on charge relay system residues serine 452, aspartate 463, and lysine 477.

Belongs to the peptidase S41A family.

It localises to the cell inner membrane. It catalyses the reaction The enzyme shows specific recognition of a C-terminal tripeptide, Xaa-Yaa-Zaa, in which Xaa is preferably Ala or Leu, Yaa is preferably Ala or Tyr, and Zaa is preferably Ala, but then cleaves at a variable distance from the C-terminus. A typical cleavage is -Ala-Ala-|-Arg-Ala-Ala-Lys-Glu-Asn-Tyr-Ala-Leu-Ala-Ala.. Its function is as follows. Involved in the cleavage of a C-terminal peptide of 11 residues from the precursor form of penicillin-binding protein 3 (PBP3). May be involved in protection of the bacterium from thermal and osmotic stresses. This chain is Tail-specific protease (prc), found in Salmonella typhimurium (strain LT2 / SGSC1412 / ATCC 700720).